The chain runs to 357 residues: DNA replication and repair protein RecF (357 aa).

30–37 contributes to the ATP binding site; sequence GPNGSGKT.

The protein belongs to the RecF family.

It localises to the cytoplasm. Functionally, the RecF protein is involved in DNA metabolism; it is required for DNA replication and normal SOS inducibility. RecF binds preferentially to single-stranded, linear DNA. It also seems to bind ATP. The protein is DNA replication and repair protein RecF of Vibrio campbellii (strain ATCC BAA-1116).